A 709-amino-acid polypeptide reads, in one-letter code: Copper amine oxidase vicK1 (709 aa).

The first 20 residues, 1–20 (MKLFLLFTLTLVNIFSVSLQ), serve as a signal peptide directing secretion. Asp365 functions as the Proton acceptor in the catalytic mechanism. A disulfide bridge connects residues Cys383 and Cys408. Catalysis depends on Tyr448, which acts as the Schiff-base intermediate with substrate; via topaquinone. Residue Tyr448 is modified to 2',4',5'-topaquinone. His496 and His498 together coordinate Cu cation. Residues Asp505, Leu506, Asp507, Glu548, Phe641, Glu645, Asp651, and Leu652 each coordinate Ca(2+). His662 serves as a coordination point for Cu cation.

It belongs to the copper/topaquinone oxidase family. As to quaternary structure, homodimer; disulfide-linked. Requires Cu cation as cofactor. Ca(2+) is required as a cofactor. The cofactor is L-topaquinone. Topaquinone (TPQ) is generated by copper-dependent autoxidation of a specific tyrosyl residue.

It participates in mycotoxin biosynthesis. Its function is as follows. Copper amine oxidase, part of the gene cluster that mediates the biosynthesis of the secondary metabolite victorin, the molecular basis for Victoria blight of oats. Within the pathway, vicK1 catalyzes the oxidative deamination of the N-terminal glycyl moiety of the hexapeptides in order to produce the active glyoxylate form victorins. The pathway starts with the processing of the precursor vicA1 by several endopeptidases including kexin proteases as well as the cluster-specific S28 family peptidases vicPa and vicPb to produce 7 identical copies of the hexapeptide Gly-Leu-Lys-Leu-Ala-Phe. After being excised from the precursor peptide, the core peptides are cyclized and modified post-translationally by enzymes encoded within the gene cluster. The ustYa family oxidase vicYb is required for the formation of the macrocycle in victorin and the copper amine oxidases (CAOs) vicK1 and vicK2 are responsible for converting victorin to the active form by oxidizing the N-terminal glycyl residue in the peptides to glyoxylate. Relaxed substrate specificity of enzymes in the victorin biosynthetic pathway results in a metabolic grid that produces a set of analogs including victorinines B, C, E or HV-toxin M. This Bipolaris victoriae (strain FI3) (Victoria blight of oats agent) protein is Copper amine oxidase vicK1.